The sequence spans 87 residues: Small ribosomal subunit protein bS20 (87 aa).

The interval Met-1–Arg-22 is disordered.

Belongs to the bacterial ribosomal protein bS20 family.

In terms of biological role, binds directly to 16S ribosomal RNA. In Nitratidesulfovibrio vulgaris (strain DP4) (Desulfovibrio vulgaris), this protein is Small ribosomal subunit protein bS20.